Consider the following 178-residue polypeptide: uncharacterized protein (178 aa).

The MSP domain maps to 52–177; the sequence is HIAIEDRAHQ…RRLPASFLST (126 aa).

This is an uncharacterized protein from Caenorhabditis elegans.